The following is a 1397-amino-acid chain: ABC transporter G family member 41 (1397 aa).

The region spanning 138 to 411 (SLSKFVCSKK…FEGCGFKCPE (274 aa)) is the ABC transporter 1 domain. Position 171–178 (171–178 (GPPGCGKT)) interacts with ATP. One can recognise an ABC transmembrane type-2 1 domain in the interval 489–701 (EMLKACSRRE…AEIGLTANEF (213 aa)). Transmembrane regions (helical) follow at residues 507-527 (FIYLFKSGLLVFNALVTMTVF), 549-570 (ALFRLLADGLPELTLTISRLGV), 594-614 (IPLSVLDSFIWTVLTYYVIGY), 625-645 (FIILLTFHLSCISMFRAIASI), 651-671 (ACSITGAISVLLLALFGGFVI), and 735-755 (TAFGALVGFVLFFNALYTLAL). The region spanning 805-1050 (VTFQNVQYYI…VIKYFESIPG (246 aa)) is the ABC transporter 2 domain. Residue 842–849 (GVSGAGKT) coordinates ATP. One can recognise an ABC transmembrane type-2 2 domain in the interval 1122 to 1336 (GQLKACLWKQ…VLEGLLSSQY (215 aa)). Helical transmembrane passes span 1141–1161 (HNLTRIVFILLNSLLCSLLFW), 1173–1193 (LFSIFGSMYTIVIFSGINNCA), 1229–1249 (VPYSLLQSLLCTIIVYPMIGY), 1260–1280 (LYSIFCSLLIFNYCGMLMVAL), 1286–1306 (MALTLRSTFFSMVNLFAGFVM), 1314–1334 (WWIWMYYLSPTSWVLEGLLSS), and 1369–1389 (VVAFVLIAFPIIVASLFAFFM).

This sequence belongs to the ABC transporter superfamily. ABCG family. PDR (TC 3.A.1.205) subfamily. As to expression, confined to roots.

Its subcellular location is the membrane. In terms of biological role, may be a general defense protein. The protein is ABC transporter G family member 41 (ABCG41) of Arabidopsis thaliana (Mouse-ear cress).